We begin with the raw amino-acid sequence, 440 residues long: MSEFSQTVPELVAWARKNDFSISLPVDRLSFLLAVATLNGERLDGEMSEGELVDAFRHVSDAFEQTSETIGVRANNAINDMVRQRLLNRFTSEQAEGNAIYRLTPLGIGITDYYIRQREFSTLRLSMQLSIVAGELKRAADAAEEGGDEFHWHRNVYAPLKYSVAEIFDSIDLTQRLMDEQQQQVKDDIAQLLNKDWRAAISSCELLLSETSGTLRELQDTLEAAGDKLQANLLRIQDATMTHDDLHFVDRLVFDLQSKLDRIICWGQQSIDLWIGYDRHVHKFIRTAIDMDKNRVFAQRLRQSVQTYFDEPWALTYANADRLLDMRDEEMALRDEEVTGELPEDLEYEEFNEIREQLAAIIEEQLAVYKTRQVPLDLGLVVREYLSQYPRARHFDVARIVIDQAVRLGVAQADFTGLPAKWQPINDYGAKVQAHVIDKY.

The leucine-zipper stretch occupies residues 208 to 236; it reads LSETSGTLRELQDTLEAAGDKLQANLLRI.

Belongs to the MukF family. As to quaternary structure, interacts, and probably forms a ternary complex, with MukE and MukB via its C-terminal region. The complex formation is stimulated by calcium or magnesium. It is required for an interaction between MukE and MukB.

It is found in the cytoplasm. The protein localises to the nucleoid. Its function is as follows. Involved in chromosome condensation, segregation and cell cycle progression. May participate in facilitating chromosome segregation by condensation DNA from both sides of a centrally located replisome during cell division. Not required for mini-F plasmid partitioning. Probably acts via its interaction with MukB and MukE. Overexpression results in anucleate cells. It has a calcium binding activity. The chain is Chromosome partition protein MukF from Escherichia coli (strain ATCC 8739 / DSM 1576 / NBRC 3972 / NCIMB 8545 / WDCM 00012 / Crooks).